The chain runs to 291 residues: Phosphatidylglycerol--prolipoprotein diacylglyceryl transferase (291 aa).

4 helical membrane-spanning segments follow: residues 24 to 44, 64 to 84, 100 to 120, and 125 to 145; these read WYAL…RALL, FILW…VLFY, WNGG…VILF, and GLPI…GLFL. Arg147 serves as a coordination point for a 1,2-diacyl-sn-glycero-3-phospho-(1'-sn-glycerol). Helical transmembrane passes span 187–207, 211–231, and 247–267; these read AALE…LGAL, GLVL…AEFF, and MGML…YAAW.

Belongs to the Lgt family.

The protein localises to the cell inner membrane. It carries out the reaction L-cysteinyl-[prolipoprotein] + a 1,2-diacyl-sn-glycero-3-phospho-(1'-sn-glycerol) = an S-1,2-diacyl-sn-glyceryl-L-cysteinyl-[prolipoprotein] + sn-glycerol 1-phosphate + H(+). It participates in protein modification; lipoprotein biosynthesis (diacylglyceryl transfer). Functionally, catalyzes the transfer of the diacylglyceryl group from phosphatidylglycerol to the sulfhydryl group of the N-terminal cysteine of a prolipoprotein, the first step in the formation of mature lipoproteins. The sequence is that of Phosphatidylglycerol--prolipoprotein diacylglyceryl transferase from Nitrobacter winogradskyi (strain ATCC 25391 / DSM 10237 / CIP 104748 / NCIMB 11846 / Nb-255).